We begin with the raw amino-acid sequence, 599 residues long: UPF0313 protein UNCMA_01890 (599 aa).

Residues 281–557 (EDIPALRTVR…RALLQYKNPE (277 aa)) enclose the Radical SAM core domain. Residues Cys299, Cys303, and Cys306 each coordinate [4Fe-4S] cluster.

The protein belongs to the UPF0313 family. [4Fe-4S] cluster is required as a cofactor.

The sequence is that of UPF0313 protein UNCMA_01890 from Methanocella arvoryzae (strain DSM 22066 / NBRC 105507 / MRE50).